A 533-amino-acid polypeptide reads, in one-letter code: MLDFLAANPLIALVVILAVGLAIGQIRVFGLSLGAAAVLFVALVVSTANTDIVIPMIVYQLGLAMFVYVIGLSAGPAFFSEFAKKGWKLTIFMLLLLATLIGLAWVLIKSLGLDAAIGTGMFTGALTSTPGMAAVVELIEGIDPSLASEPVIGYSLAYPGAVLGSIVVAAVGAKLLKVNHREDARKEGMITAPLVWKGVQLKPGITGRVGDLPRLAGESIIATRIVDDPHTHRLADPDLPITEGMELLINGTEEAVDRAIKALGEERETKIEDTELIYTRLTVSSPEVAGRTVAELDTVAHGFMIARIRQGDSEVVPKPDTVINYSDRIRVVVAPGRVAEVRRFLGDSEKSLADVNLLPLAIGLSLGLLLGAIPIPLPGGTTMSLGFGGGPIIAGLILGALKHTGPLTWQMPFHANRTISTLGLALFLAGVGTSAGAGFRAALTDSSSLIYMAGGLVITLASALLCAVIGMWVLRLRWDEAMGVAAGTTTNPAIISYLNGQTGTDLANRGYATVYPTAMIGKILGAQILFLLL.

5 helical membrane-spanning segments follow: residues 4–23 (FLAANPLIALVVILAVGLAI), 28–47 (VFGLSLGAAAVLFVALVVST), 57–79 (IVYQLGLAMFVYVIGLSAGPAFF), 86–108 (GWKLTIFMLLLLATLIGLAWVLI), and 151–173 (VIGYSLAYPGAVLGSIVVAAVGA). An RCK C-terminal domain is found at 263-347 (LGEERETKIE…VAEVRRFLGD (85 aa)). 4 helical membrane passes run 352–374 (LADVNLLPLAIGLSLGLLLGAIP), 379–401 (GGTTMSLGFGGGPIIAGLILGAL), 422–444 (LGLALFLAGVGTSAGAGFRAALT), and 454–476 (GGLVITLASALLCAVIGMWVLRL).

The protein belongs to the AAE transporter (TC 2.A.81) family.

Its subcellular location is the cell membrane. This is an uncharacterized protein from Corynebacterium glutamicum (strain ATCC 13032 / DSM 20300 / JCM 1318 / BCRC 11384 / CCUG 27702 / LMG 3730 / NBRC 12168 / NCIMB 10025 / NRRL B-2784 / 534).